A 130-amino-acid polypeptide reads, in one-letter code: Small ribosomal subunit protein uS11 (130 aa).

It belongs to the universal ribosomal protein uS11 family. Part of the 30S ribosomal subunit. Interacts with proteins S7 and S18. Binds to IF-3.

Functionally, located on the platform of the 30S subunit, it bridges several disparate RNA helices of the 16S rRNA. Forms part of the Shine-Dalgarno cleft in the 70S ribosome. The protein is Small ribosomal subunit protein uS11 of Prochlorococcus marinus subsp. pastoris (strain CCMP1986 / NIES-2087 / MED4).